Consider the following 650-residue polypeptide: 1-deoxy-D-xylulose-5-phosphate synthase (650 aa).

A compositionally biased stretch (basic and acidic residues) spans 1-13 (MSKIKNDKRETGH). The tract at residues 1–23 (MSKIKNDKRETGHLKSPPETPLL) is disordered. Residues His92 and 133–135 (AHS) each bind thiamine diphosphate. Asp164 contacts Mg(2+). Thiamine diphosphate contacts are provided by residues 165 to 166 (GA), Asn193, Tyr302, and Glu384. Asn193 serves as a coordination point for Mg(2+).

The protein belongs to the transketolase family. DXPS subfamily. As to quaternary structure, homodimer. Requires Mg(2+) as cofactor. It depends on thiamine diphosphate as a cofactor.

It catalyses the reaction D-glyceraldehyde 3-phosphate + pyruvate + H(+) = 1-deoxy-D-xylulose 5-phosphate + CO2. It functions in the pathway metabolic intermediate biosynthesis; 1-deoxy-D-xylulose 5-phosphate biosynthesis; 1-deoxy-D-xylulose 5-phosphate from D-glyceraldehyde 3-phosphate and pyruvate: step 1/1. Catalyzes the acyloin condensation reaction between C atoms 2 and 3 of pyruvate and glyceraldehyde 3-phosphate to yield 1-deoxy-D-xylulose-5-phosphate (DXP). This Chelativorans sp. (strain BNC1) protein is 1-deoxy-D-xylulose-5-phosphate synthase.